A 299-amino-acid polypeptide reads, in one-letter code: Acetylglutamate kinase (299 aa).

Residues 68-69, Arg90, and Asn194 each bind substrate; that span reads GG.

The protein belongs to the acetylglutamate kinase family. ArgB subfamily.

It is found in the cytoplasm. The catalysed reaction is N-acetyl-L-glutamate + ATP = N-acetyl-L-glutamyl 5-phosphate + ADP. The protein operates within amino-acid biosynthesis; L-arginine biosynthesis; N(2)-acetyl-L-ornithine from L-glutamate: step 2/4. Catalyzes the ATP-dependent phosphorylation of N-acetyl-L-glutamate. The sequence is that of Acetylglutamate kinase from Psychrobacter cryohalolentis (strain ATCC BAA-1226 / DSM 17306 / VKM B-2378 / K5).